A 976-amino-acid chain; its full sequence is 3-hydroxy-3-methylglutaryl-coenzyme A reductase (976 aa).

Residues 1 to 36 (MDHEGCQGQHPQQCCQWVSNAWSEFLDLLKNAETLD) are Lumenal-facing. Positions 36-217 (DIVIMLLGYI…FTFYTAILSI (182 aa)) constitute an SSD domain. A helical membrane pass occupies residues 37 to 57 (IVIMLLGYIAMHLTFVSLFLS). Residues 58 to 64 (MRKMGSK) lie on the Cytoplasmic side of the membrane. The helical transmembrane segment at 65–85 (FWLGICTLFSSVFAFLFGLVV) threads the bilayer. The Lumenal segment spans residues 86-90 (TTKLG). The chain crosses the membrane as a helical span at residues 91-111 (VPISVILLSEGLPFLVVTIGF). The Cytoplasmic segment spans residues 112–169 (EKNIVLTRAVMSHAIEHRRIQAQNSKSGKRSPDGSTQNMIQYAVQAAIKEKGFEIIRD). The helical transmembrane segment at 170-190 (YAIEIVILVIGAASGVQGGLQ) threads the bilayer. Residues 191 to 193 (QFC) lie on the Lumenal side of the membrane. Residues 194-214 (FLAAWTLFFDFILLFTFYTAI) form a helical membrane-spanning segment. Topologically, residues 215–272 (LSIKLRSTVSSVMSICVWPLRMMASRRVAENVAKGDDELNRVRGDAPLFGRKSSSIPK) are cytoplasmic. Residues 273–293 (FKVLMILGFIFVNIVNICSIP) form a helical membrane-spanning segment. At 294–401 (FRNPSSMSTI…GGILKSLEDP (108 aa)) the chain is on the lumenal side. A helical transmembrane segment spans residues 402–422 (VLSKWIVIALALSVALNGYLF). Residues 423–976 (NVARWGIKDP…RYSEVKAIDE (554 aa)) are Cytoplasmic-facing. E618 (charge relay system) is an active-site residue. 624–630 (SASRGCK) provides a ligand contact to CoA. NADP(+)-binding positions include 685–687 (SRF) and 712–720 (DAMGMNMIS). The Charge relay system role is filled by K752. 781–783 (VLK) contacts CoA. D828 acts as the Charge relay system in catalysis. 923–924 (AH) is a binding site for CoA. Catalysis depends on H924, which acts as the Proton donor. Residues 926-954 (QHNRSAAPSRSTTPGSSHDARLTGHDQCP) form a disordered region. Residue 928–929 (NR) coordinates NADP(+). Polar residues predominate over residues 928 to 941 (NRSAAPSRSTTPGS). Over residues 943-953 (HDARLTGHDQC) the composition is skewed to basic and acidic residues.

It belongs to the HMG-CoA reductase family.

It is found in the endoplasmic reticulum membrane. It carries out the reaction (R)-mevalonate + 2 NADP(+) + CoA = (3S)-3-hydroxy-3-methylglutaryl-CoA + 2 NADPH + 2 H(+). Its pathway is metabolic intermediate biosynthesis; (R)-mevalonate biosynthesis; (R)-mevalonate from acetyl-CoA: step 3/3. In terms of biological role, HMG-CoA reductase; part of the first module of ergosterol biosynthesis pathway that includes the early steps of the pathway, conserved across all eukaryotes, and which results in the formation of mevalonate from acetyl-coenzyme A (acetyl-CoA). In this module, the cytosolic acetyl-CoA acetyltransferase catalyzes the formation of acetoacetyl-CoA. The hydroxymethylglutaryl-CoA synthase then condenses acetyl-CoA with acetoacetyl-CoA to form HMG-CoA. The rate-limiting step of the early module is the reduction to mevalonate by the 3-hydroxy-3-methylglutaryl-coenzyme A (HMG-CoA) reductase HMGR. This Fusarium fujikuroi (Bakanae and foot rot disease fungus) protein is 3-hydroxy-3-methylglutaryl-coenzyme A reductase.